The sequence spans 624 residues: Aeromonas extracellular serine protease (624 aa).

The N-terminal stretch at 1 to 24 (MKQTSLALAITALLSTLPSALVQA) is a signal peptide. Cysteine 28 and cysteine 48 are disulfide-bonded. Asparagine 53 contributes to the Ca(2+) binding site. The Peptidase S8 domain occupies 59-421 (QWYLLNSGQD…GKVRDVKGLE (363 aa)). The active-site Charge relay system is aspartate 102. Residue aspartate 111 coordinates Ca(2+). The tract at residues 116 to 140 (VRPGSKNVVTGSDDPTPTDPDTAHG) is disordered. The active-site Charge relay system is histidine 139. Residues valine 150, asparagine 152, isoleucine 154, threonine 156, aspartate 321, leucine 322, glycine 324, methionine 327, asparagine 330, and cysteine 350 each coordinate Ca(2+). A disulfide bond links cysteine 325 and cysteine 350. The Charge relay system role is filled by serine 360. In terms of domain architecture, P/Homo B spans 456–622 (LPPLVQLPWQ…SLRVLGHDAN (167 aa)). Positions 478, 512, 577, 579, 602, and 603 each coordinate Ca(2+).

This sequence belongs to the peptidase S8 family. Furin subfamily. As to quaternary structure, forms a complex with the chaperone ORF2 in the periplasm. After translocation of the ASP-ORF2 complex from the periplasm to the extracellular space, the complex is dissociated in a pH-dependent manner. Ca(2+) is required as a cofactor.

It localises to the periplasm. The protein localises to the secreted. The catalysed reaction is Cleavage of -Lys-Lys-|-Xaa and -Lys-Arg-|-Xaa bonds.. With respect to regulation, folding, maturation and production of the active form of the protease by the cell requires a protein (ORF2), encoded just downstream of asp, which acts as a chaperone. Formation of a complex with ORF2 in the periplasm also inactivates the protease activity and likely protects ASP from intrinsic proteases. In vitro, protease activity is inhibited by human alpha-2-macroglobulin, suggesting that this inhibitor can impede ASP virulence activities in A.sobria infection sites. However, slow ASP inhibition by alpha-2-macroglobulin in plasma may indicate insufficient ASP control in vivo. Activity is inhibited by serine protease inhibitors such as 4-(2-aminoethyl)-benzenesulfonyl fluoride (AEBSF) and diisopropyl fluorophosphate (DFP). Not inhibited by metallo-protease inhibitors and cysteine protease inhibitors. The treatment with reagents to modify sulfhydryl group do not reduce the activity. Its function is as follows. Exhibits serine protease activity. Preferentially cleaves the peptide bond following two basic residues, one of which is Lys, but does not recognize the bond following a single basic residue. Probable potent virulence factor that cleaves various host plasma proteins, including prekallikrein, prothrombin and fibrinogen. ASP induces vascular leakage and reduction in blood pressure by activating the host plasma kallikrein/kinin system. It affects the host coagulation system during infection through activation of prothrombin to alpha-thrombin and degradation of fibrinogen, which impairs plasma clottability. It also hydrolyzes the complement component C5, releasing the C5a anaphylatoxin, which causes the formation of pus and edema. In addition, degrades its external chaperone ORF2 after the secretion of the ASP-ORF2 complex. This chain is Aeromonas extracellular serine protease, found in Aeromonas sobria.